The chain runs to 121 residues: Large ribosomal subunit protein bL12 (121 aa).

The protein belongs to the bacterial ribosomal protein bL12 family. As to quaternary structure, homodimer. Part of the ribosomal stalk of the 50S ribosomal subunit. Forms a multimeric L10(L12)X complex, where L10 forms an elongated spine to which 2 to 4 L12 dimers bind in a sequential fashion. Binds GTP-bound translation factors.

In terms of biological role, forms part of the ribosomal stalk which helps the ribosome interact with GTP-bound translation factors. Is thus essential for accurate translation. The polypeptide is Large ribosomal subunit protein bL12 (Pediococcus pentosaceus (strain ATCC 25745 / CCUG 21536 / LMG 10740 / 183-1w)).